A 156-amino-acid chain; its full sequence is 6,7-dimethyl-8-ribityllumazine synthase (156 aa).

Residues Phe-23, 57-59 (AYE), and 81-83 (AII) each bind 5-amino-6-(D-ribitylamino)uracil. (2S)-2-hydroxy-3-oxobutyl phosphate is bound at residue 86 to 87 (GT). Catalysis depends on His-89, which acts as the Proton donor. Position 114 (Phe-114) interacts with 5-amino-6-(D-ribitylamino)uracil. Arg-128 contributes to the (2S)-2-hydroxy-3-oxobutyl phosphate binding site.

It belongs to the DMRL synthase family.

The enzyme catalyses (2S)-2-hydroxy-3-oxobutyl phosphate + 5-amino-6-(D-ribitylamino)uracil = 6,7-dimethyl-8-(1-D-ribityl)lumazine + phosphate + 2 H2O + H(+). The protein operates within cofactor biosynthesis; riboflavin biosynthesis; riboflavin from 2-hydroxy-3-oxobutyl phosphate and 5-amino-6-(D-ribitylamino)uracil: step 1/2. Catalyzes the formation of 6,7-dimethyl-8-ribityllumazine by condensation of 5-amino-6-(D-ribitylamino)uracil with 3,4-dihydroxy-2-butanone 4-phosphate. This is the penultimate step in the biosynthesis of riboflavin. The polypeptide is 6,7-dimethyl-8-ribityllumazine synthase (Helicobacter acinonychis (strain Sheeba)).